A 423-amino-acid chain; its full sequence is UDP-N-acetylglucosamine 1-carboxyvinyltransferase 1 (423 aa).

23–24 (KN) contributes to the phosphoenolpyruvate binding site. R96 contacts UDP-N-acetyl-alpha-D-glucosamine. C120 acts as the Proton donor in catalysis. C120 bears the 2-(S-cysteinyl)pyruvic acid O-phosphothioketal mark. UDP-N-acetyl-alpha-D-glucosamine is bound by residues D309 and V331.

Belongs to the EPSP synthase family. MurA subfamily.

The protein resides in the cytoplasm. The enzyme catalyses phosphoenolpyruvate + UDP-N-acetyl-alpha-D-glucosamine = UDP-N-acetyl-3-O-(1-carboxyvinyl)-alpha-D-glucosamine + phosphate. The protein operates within cell wall biogenesis; peptidoglycan biosynthesis. In terms of biological role, cell wall formation. Adds enolpyruvyl to UDP-N-acetylglucosamine. The chain is UDP-N-acetylglucosamine 1-carboxyvinyltransferase 1 from Streptococcus pyogenes serotype M1.